We begin with the raw amino-acid sequence, 279 residues long: Thymidylate synthase (279 aa).

Position 133 to 134 (133 to 134) interacts with dUMP; it reads RR. C154 (nucleophile) is an active-site residue. Residues 178-181, N189, and 219-221 each bind dUMP; these read RSND and HIY. D181 contacts (6R)-5,10-methylene-5,6,7,8-tetrahydrofolate. A278 provides a ligand contact to (6R)-5,10-methylene-5,6,7,8-tetrahydrofolate.

The protein belongs to the thymidylate synthase family. Bacterial-type ThyA subfamily. As to quaternary structure, homodimer.

The protein localises to the cytoplasm. The catalysed reaction is dUMP + (6R)-5,10-methylene-5,6,7,8-tetrahydrofolate = 7,8-dihydrofolate + dTMP. The protein operates within pyrimidine metabolism; dTTP biosynthesis. Its function is as follows. Catalyzes the reductive methylation of 2'-deoxyuridine-5'-monophosphate (dUMP) to 2'-deoxythymidine-5'-monophosphate (dTMP) while utilizing 5,10-methylenetetrahydrofolate (mTHF) as the methyl donor and reductant in the reaction, yielding dihydrofolate (DHF) as a by-product. This enzymatic reaction provides an intracellular de novo source of dTMP, an essential precursor for DNA biosynthesis. The chain is Thymidylate synthase from Streptococcus pyogenes serotype M3 (strain SSI-1).